Reading from the N-terminus, the 528-residue chain is Gamma-taxilin (528 aa).

The span at 1-10 (MATRVEEAAR) shows a compositional bias: basic and acidic residues. Positions 1 to 36 (MATRVEEAARGRGGGAEEATEAGRGGRRRSPRQKFE) are disordered. Omega-N-methylarginine is present on residues arginine 12 and arginine 24. Phosphoserine is present on residues serine 79, serine 86, serine 97, and serine 105. The segment at 102-130 (TQESREEIPGGEARTDPPDGQQDSECNRN) is disordered. Positions 104–118 (ESREEIPGGEARTDP) are enriched in basic and acidic residues. A coiled-coil region spans residues 153 to 464 (EEKLAALCKK…LKEQVSIKAA (312 aa)). A Phosphotyrosine modification is found at tyrosine 283. The tract at residues 486 to 528 (HKELNTSSKRALGAHLEAEPKSQRSAVQKPPSTGSAPAIESVD) is disordered. Positions 508–520 (QRSAVQKPPSTGS) are enriched in polar residues. At serine 517 the chain carries Phosphoserine.

This sequence belongs to the taxilin family. Binds to the C-terminal coiled coil region of syntaxin family members STX1A, STX3A and STX4A. Forms a heterodimer with ATF4 in osteoblasts. Ubiquitously expressed. Expressed at high level in heart and skeletal muscle. Expressed in brain, placenta, lung, liver, kidney and pancreas.

It localises to the nucleus membrane. Its subcellular location is the cytoplasm. The protein resides in the cytosol. Functionally, may be involved in intracellular vesicle traffic. Inhibits ATF4-mediated transcription, possibly by dimerizing with ATF4 to form inactive dimers that cannot bind DNA. May be involved in regulating bone mass density through an ATF4-dependent pathway. May be involved in cell cycle progression. This chain is Gamma-taxilin (TXLNG), found in Homo sapiens (Human).